A 398-amino-acid polypeptide reads, in one-letter code: Cap-specific mRNA (nucleoside-2'-O-)-methyltransferase 1 (398 aa).

The region spanning 85-298 (QFSNRAGHKL…ERYLVCVDFL (214 aa)) is the RrmJ-type SAM-dependent 2'-O-MTase domain. Residues glycine 132 and aspartate 211 each contribute to the S-adenosyl-L-methionine site. The active-site Proton acceptor is the lysine 252. The disordered stretch occupies residues 371 to 398 (LKAKETTTRTSAESDDSPLSSRESCKDG).

It carries out the reaction a 5'-end (N(7)-methyl 5'-triphosphoguanosine)-ribonucleoside in mRNA + S-adenosyl-L-methionine = a 5'-end (N(7)-methyl 5'-triphosphoguanosine)-(2'-O-methyl-ribonucleoside) in mRNA + S-adenosyl-L-homocysteine + H(+). S-adenosyl-L-methionine-dependent methyltransferase that mediates RNA cap1 2'-O-ribose methylation to the 5'-cap structure of RNAs. Methylates the ribose of the first nucleotide of a m(7)GpppG-capped mRNA to produce m(7)GpppNmp (cap1). This is Cap-specific mRNA (nucleoside-2'-O-)-methyltransferase 1 from Leishmania braziliensis.